The following is a 269-amino-acid chain: Tropinone reductase homolog At2g29320 (269 aa).

19-43 (LVTGAASGIGYAIVEELAGFGAKIH) contacts NADP(+). S152 contacts substrate. Y166 serves as the catalytic Proton acceptor.

This sequence belongs to the short-chain dehydrogenases/reductases (SDR) family. SDR65C subfamily.

The polypeptide is Tropinone reductase homolog At2g29320 (Arabidopsis thaliana (Mouse-ear cress)).